Consider the following 546-residue polypeptide: Cholesterol oxidase (546 aa).

A signal peptide (tat-type signal) is located at residues 1-42 (MTAQQHLSRRRMLGMAAFGAAALAGGTTIAAPRAAAAAKSAA). Positions 57, 58, 77, 152, 156, 157, 159, and 287 each coordinate FAD. Residues Glu-398 and His-484 each act as proton acceptor in the active site. The FAD site is built by Gly-512 and Phe-524.

The protein belongs to the GMC oxidoreductase family. In terms of assembly, monomer. It depends on FAD as a cofactor. Predicted to be exported by the Tat system. The position of the signal peptide cleavage has been experimentally proven.

The protein resides in the secreted. The catalysed reaction is cholesterol + O2 = cholest-5-en-3-one + H2O2. The enzyme catalyses cholest-5-en-3-one = cholest-4-en-3-one. It participates in steroid metabolism; cholesterol degradation. Its function is as follows. Bifunctional enzyme that catalyzes the oxidation and isomerization of cholesterol to cholestenone (cholest-4-en-3-one), an initial step in the cholesterol degradation process. The cholesterol degradation pathway allows the bacterium to utilize cholesterol as its sole source of carbon and energy. The polypeptide is Cholesterol oxidase (Streptomyces sp. (strain SA-COO)).